The following is a 293-amino-acid chain: uncharacterized protein (293 aa).

The helical transmembrane segment at Ile55–Ala77 threads the bilayer.

The protein localises to the membrane. This is an uncharacterized protein from Caenorhabditis elegans.